A 1188-amino-acid chain; its full sequence is Carboxylic acid reductase (1188 aa).

AMP-binding positions include histidine 315, serine 408, 429 to 430 (DG), threonine 434, aspartate 507, 519 to 522 (YVDR), lysine 528, and lysine 629. In terms of domain architecture, Carrier spans 665–743 (AGERPVIETV…SVAAHIEKER (79 aa)). O-(pantetheine 4'-phosphoryl)serine is present on serine 702. NADP(+) contacts are provided by residues 801–804 (NGWL), arginine 828, arginine 838, 868–869 (DF), 894–896 (SGA), serine 934, tyrosine 970, lysine 974, and serine 997.

The protein belongs to the ATP-dependent AMP-binding enzyme family. Carboxylic acid reductase subfamily. Pantetheine 4'-phosphate serves as cofactor.

It catalyses the reaction a carboxylate + ATP + NADPH + H(+) = an aldehyde + AMP + diphosphate + NADP(+). Catalyzes the ATP- and NADPH-dependent reduction of carboxylic acids to the corresponding aldehydes. Catalyzes the reduction of a very wide range of carboxylic acids, including benzoic acids, heterocyclic, phenylacetic, phenylpropanoic and fatty acid substrates. The chain is Carboxylic acid reductase from Segniliparus rugosus (strain ATCC BAA-974 / DSM 45345 / CCUG 50838 / CIP 108380 / JCM 13579 / CDC 945).